The primary structure comprises 442 residues: tRNA-2-methylthio-N(6)-dimethylallyladenosine synthase (442 aa).

Residues 3–120 (KKLYIETHGC…LPEMIDAARI (118 aa)) form the MTTase N-terminal domain. 6 residues coordinate [4Fe-4S] cluster: C12, C49, C83, C157, C161, and C164. In terms of domain architecture, Radical SAM core spans 143-375 (RVDGPSAYVS…QHRLNQQGFE (233 aa)). A TRAM domain is found at 378-442 (RQMVGSIQRI…PHSLRGSLLQ (65 aa)).

The protein belongs to the methylthiotransferase family. MiaB subfamily. In terms of assembly, monomer. [4Fe-4S] cluster serves as cofactor.

The protein localises to the cytoplasm. It carries out the reaction N(6)-dimethylallyladenosine(37) in tRNA + (sulfur carrier)-SH + AH2 + 2 S-adenosyl-L-methionine = 2-methylsulfanyl-N(6)-dimethylallyladenosine(37) in tRNA + (sulfur carrier)-H + 5'-deoxyadenosine + L-methionine + A + S-adenosyl-L-homocysteine + 2 H(+). Functionally, catalyzes the methylthiolation of N6-(dimethylallyl)adenosine (i(6)A), leading to the formation of 2-methylthio-N6-(dimethylallyl)adenosine (ms(2)i(6)A) at position 37 in tRNAs that read codons beginning with uridine. The protein is tRNA-2-methylthio-N(6)-dimethylallyladenosine synthase of Pseudomonas savastanoi pv. phaseolicola (strain 1448A / Race 6) (Pseudomonas syringae pv. phaseolicola (strain 1448A / Race 6)).